We begin with the raw amino-acid sequence, 217 residues long: D-methionine transport system permease protein MetI (217 aa).

Topologically, residues 1-19 (MSEPMMWLLVRGVWETLAM) are periplasmic. The ABC transmembrane type-1 domain occupies 13–204 (VWETLAMTFV…LLVILVYLIQ (192 aa)). Residues 20–40 (TFVSGFFGFVVGLPVGVLLYV) form a helical membrane-spanning segment. Over 41–57 (TRPGQIIANAKLYRTVS) the chain is Cytoplasmic. A helical transmembrane segment spans residues 58 to 78 (AIVNIFRSIPFIILLVWMIPF). Topologically, residues 79-80 (TR) are periplasmic. Residues 81–101 (VIVGTSIGLQAAIVPLTVGAA) traverse the membrane as a helical segment. Residues 102 to 151 (PFIARMVENALLEIPTGLIEASRAMGATPMQIVRKVLLPEALPGLVNAAT) are Cytoplasmic-facing. A helical transmembrane segment spans residues 152–172 (ITLITLVGYSAMGGAVGAGGL). The Periplasmic portion of the chain corresponds to 173-185 (GQIGYQYGYIGYN). Residues 186-206 (ATVMNTVLVLLVILVYLIQFA) form a helical membrane-spanning segment. Residues 207-217 (GDRIVRAVTRK) are Cytoplasmic-facing.

Belongs to the binding-protein-dependent transport system permease family. CysTW subfamily.

The protein localises to the cell inner membrane. Part of the binding-protein-dependent transport system for D-methionine and the toxic methionine analog alpha-methyl-methionine. Probably responsible for the translocation of the substrate across the membrane. This is D-methionine transport system permease protein MetI (metI) from Escherichia coli O157:H7.